The primary structure comprises 115 residues: Large ribosomal subunit protein bL19 (115 aa).

This sequence belongs to the bacterial ribosomal protein bL19 family.

Functionally, this protein is located at the 30S-50S ribosomal subunit interface and may play a role in the structure and function of the aminoacyl-tRNA binding site. This chain is Large ribosomal subunit protein bL19 (rplS), found in Thermotoga maritima (strain ATCC 43589 / DSM 3109 / JCM 10099 / NBRC 100826 / MSB8).